The chain runs to 517 residues: Crotonobetaine/carnitine--CoA ligase (517 aa).

The protein belongs to the ATP-dependent AMP-binding enzyme family.

It carries out the reaction 4-(trimethylamino)butanoate + ATP + CoA = 4-(trimethylamino)butanoyl-CoA + AMP + diphosphate. It catalyses the reaction crotonobetaine + ATP + CoA = crotonobetainyl-CoA + AMP + diphosphate. The catalysed reaction is (R)-carnitine + ATP + CoA = (R)-carnitinyl-CoA + AMP + diphosphate. The protein operates within amine and polyamine metabolism; carnitine metabolism. Its function is as follows. Catalyzes the transfer of CoA to carnitine, generating the initial carnitinyl-CoA needed for the CaiB reaction cycle. Also has activity toward crotonobetaine and gamma-butyrobetaine. The polypeptide is Crotonobetaine/carnitine--CoA ligase (Escherichia coli O1:K1 / APEC).